Consider the following 2554-residue polypeptide: DnaJ homolog subfamily C GRV2 (2554 aa).

Disordered regions lie at residues 746–766 and 810–833; these read DVVD…KRLL and QRRA…GVDS. The segment covering 815 to 825 has biased composition (polar residues); sequence DSSSEASNPQA. Coiled coils occupy residues 925–951 and 1518–1546; these read TRQE…EDIS and RTAS…LKRQ. Positions 1524–1606 constitute a J domain; the sequence is LNEEISNISK…AQCILYRRYG (83 aa). Disordered regions lie at residues 1960-1994 and 2339-2366; these read IEDR…SSEG and SGEV…GQTP. Residues 1966 to 1977 show a composition bias toward polar residues; sequence SNDTPELQSSVA. Basic and acidic residues predominate over residues 1982-1994; it reads IEEHSDHQPSSEG. The span at 2352–2366 shows a compositional bias: polar residues; sequence VNESTDPSSLPGQTP.

Constitutively expressed in roots, hypocotyls, leaves (e.g. vascular tissues), stems, flowers (e.g. petals and stigmas), siliques and pollen.

It localises to the endosome membrane. In terms of biological role, required for endosome formation, vacuolar protein sorting and determination of the embryo growth axis. Necessary for the transport of proteins into protein storage vacuoles (PSVs). Participates in vesicle trafficking from the endosome to the central vacuole. Involved in the regulation of shoot phototropism and gravitropism, probably through the positioning of specialized amyloplasts (statoliths) in endodermal cells. The protein is DnaJ homolog subfamily C GRV2 (GRV2) of Arabidopsis thaliana (Mouse-ear cress).